Reading from the N-terminus, the 2166-residue chain is Protein TIC236, chloroplastic (2166 aa).

The transit peptide at 1–37 (MSLRLQNPFLSTPLLHGSFNRREKRINVARRAFRSKR) directs the protein to the chloroplast. Over 38-101 (IYSEKKQNDW…RSLAPVWEEG (64 aa)) the chain is Stromal. The helical transmembrane segment at 102–122 (LFFLRCSVFFAVISGVCLLVW) threads the bilayer. Residues 123–2166 (YGQNKARVFV…LFEYSATSQD (2044 aa)) are Chloroplast intermembrane-facing. Residues 1611-1649 (MSEGEVSETDRGGAVKIPSWAKEKEDDEKRTSRDRSEER) are disordered. A compositionally biased stretch (basic and acidic residues) spans 1631 to 1649 (AKEKEDDEKRTSRDRSEER).

The protein belongs to the TamB family. Part of the TIC complex, which can interact with components of the TOC complex to form a larger import complex. Interacts with the TOC complex component TOC75-3.

Its subcellular location is the plastid. The protein localises to the chloroplast inner membrane. It is found in the chloroplast intermembrane space. Functionally, part of the inner chloroplast membrane translocon complex (TIC) which associates with the outer chloroplast membrane translocon complex (TOC) and forms a supercomplex involved in protein precursor import into the chloroplast stroma. Required for the import of HSP93, TIC40 and RBCS protein precursors in the chloroplast stroma. Links the outer and inner membrane translocons of the chloroplast envelope. This Arabidopsis thaliana (Mouse-ear cress) protein is Protein TIC236, chloroplastic.